We begin with the raw amino-acid sequence, 84 residues long: Cell division topological specificity factor (84 aa).

This sequence belongs to the MinE family.

In terms of biological role, prevents the cell division inhibition by proteins MinC and MinD at internal division sites while permitting inhibition at polar sites. This ensures cell division at the proper site by restricting the formation of a division septum at the midpoint of the long axis of the cell. The protein is Cell division topological specificity factor of Cupriavidus pinatubonensis (strain JMP 134 / LMG 1197) (Cupriavidus necator (strain JMP 134)).